A 725-amino-acid polypeptide reads, in one-letter code: Exocyst complex component 8 (725 aa).

Ser-19 is subject to Phosphoserine. Residues 137–159 are disordered; the sequence is AGFFSTPGGASRDGSGPGEEGKQ. Thr-142 carries the phosphothreonine modification. The PH domain maps to 182–282; the sequence is YLVYNGDLVE…WLEVLEDTKR (101 aa). Residues 285–328 are disordered; it reads SEKRRREQEEAAAPRGPPQVTSKATNPFEDDEEEEPAVPEVEEE. Over residues 312-328 the composition is skewed to acidic residues; the sequence is FEDDEEEEPAVPEVEEE.

This sequence belongs to the EXO84 family. The exocyst complex is composed of EXOC1, EXOC2, EXOC3, EXOC4, EXOC5, EXOC6, EXOC7 and EXOC8. Interacts (via PH domain) with GTP-bound RALA and RALB. Interacts with SH3BP1; required for the localization of both SH3BP1 and the exocyst to the leading edge of migrating cells.

Its subcellular location is the cytoplasm. It is found in the perinuclear region. The protein resides in the cell projection. The protein localises to the growth cone. Its function is as follows. Component of the exocyst complex involved in the docking of exocytic vesicles with fusion sites on the plasma membrane. This is Exocyst complex component 8 (EXOC8) from Homo sapiens (Human).